The following is a 387-amino-acid chain: MKILAAMSGGVDSAVAAARAVEAGHDVTGVHLALSRMPGTLRTGSRGCCTIEDSMDARRAADLLGIPFYVWDFSERFAADVVDDFVAEYQAGRTPNPCMRCNERIKFAAVLEKALDLGFDAVCTGHYADVLEGPDGQPELHRAAAWAKDQSYVLGVLTAEQIAHSYFPLGSTPSKAEVRAEAQARGIQVAQKPDSHDICFIPDGDTRGWLADRVGAEPGEILDGEGNAIGTHQGAAAFTVGQRKGLAIGTPAPDGRPRFVLEIRPKDNTVVVGPQEALAIREIAGSSYTWAGTPPTRPDQPFDCDVQIRAHADPVPARAAVSVVDGSVQLVITPRDPLHGVAPGQTAVVYAGTRVLGQVTIDRTVSAVDDARPPMRDAALVGAAAGE.

Residues 6–13 (AMSGGVDS) and Leu32 each bind ATP. The active-site Nucleophile is Cys101. Cys101 and Cys199 form a disulfide bridge. ATP is bound at residue Gly125. The interval 148 to 150 (KDQ) is interaction with tRNA. Cys199 (cysteine persulfide intermediate) is an active-site residue.

Belongs to the MnmA/TRMU family.

Its subcellular location is the cytoplasm. The catalysed reaction is S-sulfanyl-L-cysteinyl-[protein] + uridine(34) in tRNA + AH2 + ATP = 2-thiouridine(34) in tRNA + L-cysteinyl-[protein] + A + AMP + diphosphate + H(+). In terms of biological role, catalyzes the 2-thiolation of uridine at the wobble position (U34) of tRNA, leading to the formation of s(2)U34. In Clavibacter michiganensis subsp. michiganensis (strain NCPPB 382), this protein is tRNA-specific 2-thiouridylase MnmA.